The primary structure comprises 149 residues: D-aminoacyl-tRNA deacylase (149 aa).

The short motif at 138–139 (GP) is the Gly-cisPro motif, important for rejection of L-amino acids element.

The protein belongs to the DTD family. As to quaternary structure, homodimer.

It is found in the cytoplasm. The catalysed reaction is glycyl-tRNA(Ala) + H2O = tRNA(Ala) + glycine + H(+). The enzyme catalyses a D-aminoacyl-tRNA + H2O = a tRNA + a D-alpha-amino acid + H(+). In terms of biological role, an aminoacyl-tRNA editing enzyme that deacylates mischarged D-aminoacyl-tRNAs. Also deacylates mischarged glycyl-tRNA(Ala), protecting cells against glycine mischarging by AlaRS. Acts via tRNA-based rather than protein-based catalysis; rejects L-amino acids rather than detecting D-amino acids in the active site. By recycling D-aminoacyl-tRNA to D-amino acids and free tRNA molecules, this enzyme counteracts the toxicity associated with the formation of D-aminoacyl-tRNA entities in vivo and helps enforce protein L-homochirality. This is D-aminoacyl-tRNA deacylase from Chlorobaculum parvum (strain DSM 263 / NCIMB 8327) (Chlorobium vibrioforme subsp. thiosulfatophilum).